A 708-amino-acid polypeptide reads, in one-letter code: WD repeat-containing and planar cell polarity effector protein fritz homolog (708 aa).

WD repeat units lie at residues 303–342 (PLRS…TLLA) and 343–382 (QADL…IRAQ).

Belongs to the WD repeat fritz family. As to quaternary structure, interacts with sept2-a. Interacts with intu and fuz; fuz, intu and wdpcp probably form the core CPLANE (ciliogenesis and planar polarity effectors) complex.

The protein resides in the cell membrane. Its subcellular location is the cytoplasm. The protein localises to the cytoskeleton. It localises to the cilium axoneme. It is found in the cilium basal body. In terms of biological role, probable effector of the planar cell polarity signaling pathway which regulates the septin cytoskeleton in both ciliogenesis and collective cell movements including covergent extension during gastrulation. Controls cell shape but not polarization during convergent extension. Proposed to function as core component of the CPLANE (ciliogenesis and planar polarity effectors) complex involved in the recruitment of peripheral IFT-A proteins to basal bodies. This Xenopus laevis (African clawed frog) protein is WD repeat-containing and planar cell polarity effector protein fritz homolog (wdpcp).